The sequence spans 348 residues: Rhodopsin (348 aa).

The Extracellular portion of the chain corresponds to 1 to 33; that stretch reads TEGPYFYVPMVNTTGIVRSPYEYPQYYLVNPAA. N-linked (GlcNAc...) asparagine glycosylation is present at asparagine 12. Residues 34-58 form a helical membrane-spanning segment; sequence YAVLGAYMFFLIILGFPINFLTLYV. Residues 59 to 70 are Cytoplasmic-facing; it reads TLEHKKLRTPLN. A helical transmembrane segment spans residues 71 to 93; sequence YILLNLAVADLFMVIGGFTTTMY. Residues 94-107 are Extracellular-facing; sequence SSMHGYFVLGRLGC. Cysteine 107 and cysteine 184 are joined by a disulfide. A helical membrane pass occupies residues 108–130; sequence NLEGFSATLGGMISLWSLAVLAI. The 'Ionic lock' involved in activated form stabilization signature appears at 131–133; that stretch reads ERW. At 131–149 the chain is on the cytoplasmic side; the sequence is ERWVVVCKPISNFRFGENH. A helical membrane pass occupies residues 150 to 170; that stretch reads AIMGVSLTWTMALACTVPPLV. The Extracellular portion of the chain corresponds to 171 to 199; sequence GWSRYIPEGMQCSCGIDYYTRAEGFNNES. N-linked (GlcNAc...) asparagine glycosylation occurs at asparagine 197. A helical transmembrane segment spans residues 200-221; that stretch reads FVLYMFFCHFMVPLIIIFFCYG. The Cytoplasmic portion of the chain corresponds to 222 to 249; that stretch reads RLLCAVKEAAAAQQESETTQRAEREVTR. The chain crosses the membrane as a helical span at residues 250 to 271; it reads MVILMVIGYLVCWLPYASVAWF. Residues 272-283 lie on the Extracellular side of the membrane; the sequence is IFTHQGSEFGPL. The helical transmembrane segment at 284–305 threads the bilayer; it reads FMTIPAFFAKSSSIYNPVIYIC. N6-(retinylidene)lysine is present on lysine 293. Over 306–348 the chain is Cytoplasmic; that stretch reads MNKQFRNCMITTLFCGKNPFEGEEEGASSTKTEASSASSVSPA. Residue cysteine 320 is the site of S-palmitoyl cysteine attachment. A disordered region spans residues 327-348; that stretch reads GEEEGASSTKTEASSASSVSPA. Low complexity predominate over residues 332-348; the sequence is ASSTKTEASSASSVSPA.

The protein belongs to the G-protein coupled receptor 1 family. Opsin subfamily. Phosphorylated on some or all of the serine and threonine residues present in the C-terminal region. In terms of processing, contains one covalently linked retinal chromophore.

The protein resides in the membrane. It localises to the cell projection. Its subcellular location is the cilium. The protein localises to the photoreceptor outer segment. Functionally, photoreceptor required for image-forming vision at low light intensity. While most salt water fish species use retinal as chromophore, most freshwater fish use 3-dehydroretinal, or a mixture of retinal and 3-dehydroretinal. Light-induced isomerization of 11-cis to all-trans retinal triggers a conformational change that activates signaling via G-proteins. Subsequent receptor phosphorylation mediates displacement of the bound G-protein alpha subunit by arrestin and terminates signaling. The sequence is that of Rhodopsin (rho) from Neoniphon argenteus (Clearfin squirrelfish).